A 313-amino-acid chain; its full sequence is Ribosomal RNA small subunit methyltransferase H (313 aa).

S-adenosyl-L-methionine contacts are provided by residues 35-37 (GGH), aspartate 55, phenylalanine 80, aspartate 102, and glutamine 109.

The protein belongs to the methyltransferase superfamily. RsmH family.

Its subcellular location is the cytoplasm. The catalysed reaction is cytidine(1402) in 16S rRNA + S-adenosyl-L-methionine = N(4)-methylcytidine(1402) in 16S rRNA + S-adenosyl-L-homocysteine + H(+). Functionally, specifically methylates the N4 position of cytidine in position 1402 (C1402) of 16S rRNA. This is Ribosomal RNA small subunit methyltransferase H from Shewanella woodyi (strain ATCC 51908 / MS32).